Consider the following 278-residue polypeptide: Shikimate dehydrogenase (NADP(+)) (278 aa).

Residues 19 to 21 (SLS) and T66 each bind shikimate. K70 acts as the Proton acceptor in catalysis. Position 82 (D82) interacts with NADP(+). Positions 91 and 107 each coordinate shikimate. Residues 133–137 (GSGGA), 157–162 (NRTRAR), and I222 contribute to the NADP(+) site. Y224 contributes to the shikimate binding site. G245 contributes to the NADP(+) binding site.

The protein belongs to the shikimate dehydrogenase family. As to quaternary structure, homodimer.

The enzyme catalyses shikimate + NADP(+) = 3-dehydroshikimate + NADPH + H(+). It participates in metabolic intermediate biosynthesis; chorismate biosynthesis; chorismate from D-erythrose 4-phosphate and phosphoenolpyruvate: step 4/7. Its function is as follows. Involved in the biosynthesis of the chorismate, which leads to the biosynthesis of aromatic amino acids. Catalyzes the reversible NADPH linked reduction of 3-dehydroshikimate (DHSA) to yield shikimate (SA). This chain is Shikimate dehydrogenase (NADP(+)), found in Jannaschia sp. (strain CCS1).